We begin with the raw amino-acid sequence, 365 residues long: Probable 7-methylxanthine methyltransferase PCS2 (365 aa).

Tyr-19 serves as a coordination point for S-adenosyl-L-homocysteine. Thr-26 is a theobromine binding site. The S-adenosyl-L-homocysteine site is built by Cys-62, Asp-99, Leu-100, Ser-134, and Phe-135. Theobromine contacts are provided by Tyr-152, His-155, and Trp-156. Residue Asn-173 coordinates Mg(2+). Position 221 (Arg-221) interacts with theobromine. Mg(2+) contacts are provided by Asp-259, Phe-261, and Asn-262.

It belongs to the methyltransferase superfamily. Type-7 methyltransferase family. It depends on Mg(2+) as a cofactor.

It carries out the reaction 7-methylxanthine + S-adenosyl-L-methionine = theobromine + S-adenosyl-L-homocysteine + H(+). No detectable N-methyltransferase activity. This is Probable 7-methylxanthine methyltransferase PCS2 from Camellia ptilophylla (Cocoa tea).